The sequence spans 133 residues: Small ribosomal subunit protein uS8 (133 aa).

This sequence belongs to the universal ribosomal protein uS8 family. In terms of assembly, part of the 30S ribosomal subunit.

In terms of biological role, one of the primary rRNA binding proteins, it binds directly to 16S rRNA central domain where it helps coordinate assembly of the platform of the 30S subunit. This chain is Small ribosomal subunit protein uS8, found in Saccharolobus islandicus (strain L.S.2.15 / Lassen #1) (Sulfolobus islandicus).